Here is an 829-residue protein sequence, read N- to C-terminus: Leucine--tRNA ligase (829 aa).

Residues 40-50 (PYPSGNIHMGH) carry the 'HIGH' region motif. The 'KMSKS' region signature appears at 594 to 598 (KMSKS). Position 597 (lysine 597) interacts with ATP.

This sequence belongs to the class-I aminoacyl-tRNA synthetase family.

It localises to the cytoplasm. The catalysed reaction is tRNA(Leu) + L-leucine + ATP = L-leucyl-tRNA(Leu) + AMP + diphosphate. The chain is Leucine--tRNA ligase from Anaplasma marginale (strain St. Maries).